Consider the following 287-residue polypeptide: Membrane protein insertase YidC 2 (287 aa).

Residues 1-26 form the signal peptide; it reads MKKKKRFKQKLLIASLVIGLMAVLSG. A lipid anchor (N-palmitoyl cysteine) is attached at Cys27. The S-diacylglycerol cysteine moiety is linked to residue Cys27. A run of 5 helical transmembrane segments spans residues 65 to 85, 135 to 155, 178 to 198, 207 to 224, and 228 to 250; these read YAVG…PLMI, MMGC…YQAI, YILP…SMMG, AMIV…GITL, and LALY…NNPF.

Belongs to the OXA1/ALB3/YidC family. Type 2 subfamily.

Its subcellular location is the cell membrane. Its function is as follows. Required for the insertion and/or proper folding and/or complex formation of integral membrane proteins into the membrane. Involved in integration of membrane proteins that insert both dependently and independently of the Sec translocase complex, as well as at least some lipoproteins. The sequence is that of Membrane protein insertase YidC 2 from Listeria monocytogenes serovar 1/2a (strain ATCC BAA-679 / EGD-e).